The primary structure comprises 112 residues: Large ribosomal subunit protein P2-B (112 aa).

Positions 89 to 112 are disordered; that stretch reads APAAADAKKEEEEEDDDMGFGLFD.

This sequence belongs to the eukaryotic ribosomal protein P1/P2 family. P1 and P2 exist as dimers at the large ribosomal subunit. In terms of processing, phosphorylated.

Functionally, plays an important role in the elongation step of protein synthesis. The protein is Large ribosomal subunit protein P2-B of Trypanosoma cruzi.